The primary structure comprises 314 residues: N-myc-interactor (314 aa).

The disordered stretch occupies residues 1-24; sequence MDADKDNIKQACDERSAEMDDMRG. A Phosphoserine modification is found at Ser16. Residues 31 to 65 adopt a coiled-coil conformation; the sequence is VHEIMSENKELDEEIKKLEAELQSDAREFQIKENV. 2 consecutive NID domains span residues 104 to 193 and 202 to 293; these read GQAL…GEVE and RSAV…EVEV.

It belongs to the NMI family. In terms of assembly, interacts with MYCN and MYC, as well as with other transcription factors with a Zip, HLH or a HLH-Zip motif. Interacts with all STAT proteins except STAT2. Interacts with IRF7, the interaction is direct and leads to the inhibition of IRF7-mediated type I IFN production. Interacts (via coiled-coil domain) with TRIM21 (via the SPRY domain); the interaction leads to 'Lys-63'-linked ubiquitination of NMI. Interacts with IFI35; the interaction is direct and is facilitated by TRIM21. Interacts with TLR4; the interaction is direct and leads to NF-kappa-B activation. Post-translationally, may be ubiquitinated. As to expression, expressed in macrophages.

It is found in the cytoplasm. Its subcellular location is the nucleus. The protein resides in the secreted. Acts as a signaling pathway regulator involved in innate immune system response. In response to interleukin 2/IL2 and interferon IFN-gamma/IFNG, interacts with signal transducer and activator of transcription/STAT which activate the transcription of downstream genes involved in a multitude of signals for development and homeostasis. Enhances the recruitment of CBP/p300 coactivators to STAT1 and STAT5, resulting in increased STAT1- and STAT5-dependent transcription. In response to interferon IFN-alpha, associates in a complex with transcriptional regulator IFI35 to regulate immune response; the complex formation prevents proteasome-mediated degradation of IFI35. In complex with IFI35, negatively regulates nuclear factor NF-kappa-B signaling by inhibiting the nuclear translocation, activation and transcription of NF-kappa-B subunit p65/RELA, resulting in the inhibition of endothelial cell proliferation, migration and re-endothelialization of injured arteries. Negatively regulates virus-triggered type I interferon/IFN production by inducing proteosome-dependent degradation of IRF7, a transcriptional regulator of type I IFN, thereby interfering with cellular antiviral responses. Beside its role as an intracellular signaling pathway regulator, also functions extracellularly as damage-associated molecular patterns (DAMPs) to promote inflammation, when actively released by macrophage to the extracellular space during cell injury or pathogen invasion. Macrophage-secreted NMI activates NF-kappa-B signaling in adjacent macrophages through Toll-like receptor 4/TLR4 binding and activation, thereby inducing NF-kappa-B translocation from the cytoplasm into the nucleus which promotes the release of pro-inflammatory cytokines. In Mus musculus (Mouse), this protein is N-myc-interactor.